Here is a 579-residue protein sequence, read N- to C-terminus: Alpha-longipinene synthase (579 aa).

Mg(2+) is bound by residues D332, D336, D476, and N484. The DDXXD motif motif lies at 332-336; the sequence is DDLYD.

Belongs to the terpene synthase family. Tpsd subfamily. It depends on Mg(2+) as a cofactor. The cofactor is Mn(2+).

It catalyses the reaction (2E,6E)-farnesyl diphosphate = alpha-longipinene + diphosphate. It functions in the pathway sesquiterpene biosynthesis. The protein operates within terpene metabolism; oleoresin biosynthesis. In terms of biological role, terpene synthase (TPS) involved in the biosynthesis of sesquiterpene natural products included in conifer oleoresin secretions and volatile emissions; these compounds contribute to biotic and abiotic stress defense against herbivores and pathogens. Catalyzes the conversion of (2E,6E)-farnesyl diphosphate (FPP) to alpha-longipinene. This is Alpha-longipinene synthase from Picea sitchensis (Sitka spruce).